The following is a 239-amino-acid chain: Ribonuclease PH (239 aa).

Residues Arg-87 and 125-127 (GTR) contribute to the phosphate site.

It belongs to the RNase PH family. Homohexameric ring arranged as a trimer of dimers.

The enzyme catalyses tRNA(n+1) + phosphate = tRNA(n) + a ribonucleoside 5'-diphosphate. Functionally, phosphorolytic 3'-5' exoribonuclease that plays an important role in tRNA 3'-end maturation. Removes nucleotide residues following the 3'-CCA terminus of tRNAs; can also add nucleotides to the ends of RNA molecules by using nucleoside diphosphates as substrates, but this may not be physiologically important. Probably plays a role in initiation of 16S rRNA degradation (leading to ribosome degradation) during starvation. The sequence is that of Ribonuclease PH from Acaryochloris marina (strain MBIC 11017).